The following is a 203-amino-acid chain: UPF0637 protein Sca_0732 (203 aa).

The protein belongs to the UPF0637 family.

In Staphylococcus carnosus (strain TM300), this protein is UPF0637 protein Sca_0732.